A 455-amino-acid chain; its full sequence is MNRVSASADDRAAGARPARDLVRVAFGPGVVALGIIAAVTLLQLLIANSDMTGAWGAIASMWLGVHLVPISIGGRALGVMPLLPVLLMVWATARSTARATSPQSSGLVVRWVVASALGGPLLMAAIALAVIHDASSVVTELQTPSALRAFTSVLVVHSVGAATGVWSRVGRRALAATALPDWLHDSMRAAAAGVLALLGLSGVVTAGSLVVHWATMQELYGITDSIFGQFSLTVLSVLYAPNVIVGTSAIAVGSSAHIGFATFSSFAVLGGDIPALPILAAAPTPPLGPAWVALLIVGASSGVAVGQQCARRALPFVAAMAKLLVAAVAGALVMAVLGYGGGGRLGNFGDVGVDEGALVLGVLFWFTFVGWVTVVIAGGISRRPKRLRPAPPVELDADESSPPVDMFDGAASEQPPASVAEDVPPSHDDIANGLKAPTADDEALPLSDEPPPRAD.

11 helical membrane passes run 26–46 (FGPGVVALGIIAAVTLLQLLI), 53–73 (GAWGAIASMWLGVHLVPISIG), 77–97 (LGVMPLLPVLLMVWATARSTA), 111–131 (WVVASALGGPLLMAAIALAVI), 146–166 (ALRAFTSVLVVHSVGAATGVW), 191–211 (AAGVLALLGLSGVVTAGSLVV), 232–252 (LTVLSVLYAPNVIVGTSAIAV), 256–276 (AHIGFATFSSFAVLGGDIPAL), 278–298 (ILAAAPTPPLGPAWVALLIVG), 323–343 (LLVAAVAGALVMAVLGYGGGG), and 357–377 (ALVLGVLFWFTFVGWVTVVIA). Residues 384–455 (PKRLRPAPPV…LSDEPPPRAD (72 aa)) are disordered.

It localises to the cell membrane. This is an uncharacterized protein from Mycobacterium tuberculosis (strain CDC 1551 / Oshkosh).